Reading from the N-terminus, the 95-residue chain is Signal recognition particle 19 kDa protein (95 aa).

Belongs to the SRP19 family. Part of the signal recognition particle protein translocation system, which is composed of SRP and FtsY. Archaeal SRP consists of a 7S RNA molecule of 300 nucleotides and two protein subunits: SRP54 and SRP19.

It localises to the cytoplasm. Functionally, involved in targeting and insertion of nascent membrane proteins into the cytoplasmic membrane. Binds directly to 7S RNA and mediates binding of the 54 kDa subunit of the SRP. This Methanococcoides burtonii (strain DSM 6242 / NBRC 107633 / OCM 468 / ACE-M) protein is Signal recognition particle 19 kDa protein.